The sequence spans 344 residues: MGATRARIAVDAMGGDHAPDQIVAGALRAREELEVEVLLVGDPDQIHSAVKHHNNSSAIEIVPAEGVIEMHEEPLSGIKRKPRASINVAMNLVKEKQADAVVSAGHSGAAMAAALLRLGRLPGIDRPAIGAVLPTLIPGKAVLILDVGANVDCRPKFLEQFALMGTIYSQYVLGVEKPQVGLLNIGEEECKGNDLALRTYEILKENTQIPFVGNAEGRDVLSGQFDVIVCDGFVGNVLLKFAEAVGEVALQILREELPRGLHGQVGTALLKPNLRRIKQRMDHAEHGGGLLLGVNGVCIISHGSSQAPSIFNAIRLAKEAVDHQVSDRIQASCRLTANPVVDGN.

The protein belongs to the PlsX family. As to quaternary structure, homodimer. Probably interacts with PlsY.

It is found in the cytoplasm. It catalyses the reaction a fatty acyl-[ACP] + phosphate = an acyl phosphate + holo-[ACP]. The protein operates within lipid metabolism; phospholipid metabolism. In terms of biological role, catalyzes the reversible formation of acyl-phosphate (acyl-PO(4)) from acyl-[acyl-carrier-protein] (acyl-ACP). This enzyme utilizes acyl-ACP as fatty acyl donor, but not acyl-CoA. The sequence is that of Phosphate acyltransferase from Cyanothece sp. (strain PCC 7425 / ATCC 29141).